The following is a 192-amino-acid chain: Pyruvate kinase (192 aa).

Arg-41 contacts substrate. Residues Asn-43, Ser-45, Asp-75, and Thr-76 each contribute to the K(+) site. 43-46 (NFSH) provides a ligand contact to ATP.

Belongs to the pyruvate kinase family. Mg(2+) is required as a cofactor. The cofactor is K(+).

It catalyses the reaction pyruvate + ATP = phosphoenolpyruvate + ADP + H(+). It participates in carbohydrate degradation; glycolysis; pyruvate from D-glyceraldehyde 3-phosphate: step 5/5. The sequence is that of Pyruvate kinase (pyk) from Spiroplasma citri.